Reading from the N-terminus, the 668-residue chain is Golgin subfamily A member 6-like protein 1 (668 aa).

Disordered stretches follow at residues 1–120, 323–356, 384–466, 481–591, and 603–639; these read MLMW…HQEA, IREQEEKIREQEEKMRRQEEMMWEKEEKMRRQEE, EKMH…EMWR, KEKM…REQE, and EQEEMMQEQEEKMWEQEEKMCEQEEKMQEQEEKMRRQ. The span at 15–41 shows a compositional bias: basic residues; sequence LPTHPHLPTHPHLPTHPHLPTHPHLPT. A compositionally biased stretch (basic and acidic residues) spans 51 to 72; it reads MSKETRQSKLAEAKEQLTDHHP. Composition is skewed to polar residues over residues 73 to 83 and 91 to 103; these read QTNPSVGTAAS and NNGTNPETTTSGG. Residues 106-120 are compositionally biased toward basic and acidic residues; sequence SPEDEQKASHQHQEA. Positions 177–663 form a coiled coil; it reads LEQALSAVAT…EEKMQEHQEH (487 aa).

Belongs to the GOLGA6 family.

The chain is Golgin subfamily A member 6-like protein 1 (GOLGA6L1) from Homo sapiens (Human).